We begin with the raw amino-acid sequence, 62 residues long: MVLRRLSRQASVKVRRSWTESKKTAQRLFVFVLELLLQFCEGEDTVDGKRKKPERLTEKPES.

At 1–23 (MVLRRLSRQASVKVRRSWTESKK) the chain is on the cytoplasmic side. Residues 24–40 (TAQRLFVFVLELLLQFC) traverse the membrane as a helical; Signal-anchor for type II membrane protein segment. Topologically, residues 41–62 (EGEDTVDGKRKKPERLTEKPES) are extracellular.

This sequence belongs to the polyomaviruses agnoprotein family. In terms of assembly, homooligomer. Interacts with VP1. Interacts with large T antigen; this interaction may impact upon the activity of T-antigen on the control of viral gene transcription and replication. Interacts with small t antigen. Interacts with host CBX5; this interaction induces the dissociation of CBX5 from LBR, resulting in destabilization of the nuclear envelope. In terms of processing, phosphorylated by host kinase. Phosphorylation segregates agnoprotein in cytoplasm, whereas unphosphorylated agnoprotein migrate to the nucleus.

The protein localises to the host cytoplasm. It localises to the host nucleus membrane. It is found in the host rough endoplasmic reticulum membrane. Its subcellular location is the host cell membrane. Alters the structure of the nuclear envelope by interacting with host CBX5 and disrupting CBX5 association with LBR. Involved in the perinuclear-nuclear localization of the capsid protein VP1 during virion assembly and maturation. Plays an important role in the release of progeny virions from infected cells and in viral propagation, probably by acting as a viral ionic channel in the host plasma membrane. Allows influx of extracellular calcium ions in the host cell. May contribute to viral genome transcription and translation of viral late proteins. The protein is Agnoprotein of Simian virus 40 (SV40).